Consider the following 481-residue polypeptide: Protein hedgehog (481 aa).

Residue Cys-93 is the site of N-palmitoyl cysteine attachment. Residues Glu-157, Glu-158, Asp-163, Thr-193, Glu-194, Asp-197, and Asp-199 each contribute to the Ca(2+) site. Residue Gly-265 is the site of Cholesterol glycine ester attachment.

Belongs to the hedgehog family. Interacts with shf. The C-terminal part of the hedgehog protein precursor displays an autoproteolysis activity that results in the cleavage of the full-length protein into two parts (N-product and C-product). In addition, the C-terminal part displays a cholesterol transferase activity that results by the covalent attachment of a cholesterol moiety to the C-terminal of the newly generated N-product. The N-product is the active species in both local and long-range signaling, whereas the C-product has no signaling activity. Post-translationally, cholesterylation is required for N-product targeting to lipid rafts and multimerization. In terms of processing, N-palmitoylation by Rasp of the hedgehog N-product, within the secretory pathway, is required for the embryonic and larval patterning activities of the hedgehog signal.

The protein localises to the nucleus. Its subcellular location is the cytoplasm. It is found in the cell membrane. It catalyses the reaction glycyl-L-cysteinyl-[protein] + cholesterol + H(+) = [protein]-C-terminal glycyl cholesterol ester + N-terminal L-cysteinyl-[protein]. Functionally, the C-terminal part of the hedgehog protein precursor displays an autoproteolysis activity that results in the cleavage of the full-length protein into two parts (N-product and C-product). In addition, the C-terminal part displays a cholesterol transferase activity that results by the covalent attachment of a cholesterol moiety to the C-terminal of the newly generated N-product. Once cleaved, the C-product has no signaling activity and diffuses from the cell. In terms of biological role, the dually lipidated hedgehog protein N-product is a morphogen which is essential for a variety of patterning events during development. Establishes the anterior-posterior axis of the embryonic segments and patterns the larval imaginal disks. Binds to the patched (ptc) receptor, which functions in association with smoothened (smo), to activate the transcription of target genes wingless (wg), decapentaplegic (dpp) and ptc. In the absence of hh, ptc represses the constitutive signaling activity of smo through fused (fu). Essential component of a signaling pathway which regulates the Duox-dependent gut immune response to bacterial uracil; required to activate Cad99C-dependent endosome formation, norpA-dependent Ca2+ mobilization and p38 MAPK, which are essential steps in the Duox-dependent production of reactive oxygen species (ROS) in response to intestinal bacterial infection. During photoreceptor differentiation, it up-regulates transcription of Ubr3, which in turn promotes the hh-signaling pathway by mediating the ubiquitination and degradation of cos. This is Protein hedgehog from Drosophila persimilis (Fruit fly).